Here is a 219-residue protein sequence, read N- to C-terminus: Ras-related protein Rab-32A (219 aa).

22–29 (GDIGTGKT) provides a ligand contact to GTP. The Effector region signature appears at 44–52 (YKSTIGVDF). GTP is bound by residues 71-75 (DIAGQ) and 134-137 (NKCD). The tract at residues 192–219 (NQPIEGTIQPGDLNKQPQPTSTGPSCCK) is disordered. Polar residues predominate over residues 206–219 (KQPQPTSTGPSCCK). S-geranylgeranyl cysteine attachment occurs at residues cysteine 217 and cysteine 218.

It belongs to the small GTPase superfamily. Rab family.

The chain is Ras-related protein Rab-32A (rab32A) from Dictyostelium discoideum (Social amoeba).